Here is a 94-residue protein sequence, read N- to C-terminus: Putative pterin-4-alpha-carbinolamine dehydratase (94 aa).

This sequence belongs to the pterin-4-alpha-carbinolamine dehydratase family.

It catalyses the reaction (4aS,6R)-4a-hydroxy-L-erythro-5,6,7,8-tetrahydrobiopterin = (6R)-L-erythro-6,7-dihydrobiopterin + H2O. The polypeptide is Putative pterin-4-alpha-carbinolamine dehydratase (Mycobacterium leprae (strain Br4923)).